Reading from the N-terminus, the 53-residue chain is uncharacterized protein (53 aa).

A helical membrane pass occupies residues 4–24; sequence FILLIVGFIYGAGGVLLYSVY.

It is found in the host membrane. This is an uncharacterized protein from Acidianus bottle-shaped virus (isolate Italy/Pozzuoli) (ABV).